We begin with the raw amino-acid sequence, 376 residues long: MKKGRVLVAMSGGIDSSITALLLHEQGYEIVGLTMKTWDYVSSGGRKKETGCCSLDSINDARNVAVSLGFPHIILDIREEFGDYVISNFTSEYLAGRTPNPCVLCNTHIKWDALLRRADKLNCEYIATGHYANIRHENGRYIVSRGKDLNKDQSYALWGVSQESLSRTLLPLGVFTKPEIREIASQRGFKELVTKSESYEICFIPDNDYRGFLKRRVDNLEEQVKGGEFVLEDGTVVGHHEGYPFYTVGQRKGLGITLGYPVYVTEIQADKNRVVLGTFDELARDGMYVHKLNMGKYPDLQGRRLDSVTKVRYNDPGSPAVLEQDGDIMKVFFGKGVHAIAPGQAAVFYEGDDVIGGGWIKASFKQPAFKKYNFSQ.

ATP contacts are provided by residues 9-16 (AMSGGIDS) and methionine 35. Catalysis depends on cysteine 105, which acts as the Nucleophile. A disulfide bridge connects residues cysteine 105 and cysteine 202. Glycine 129 lines the ATP pocket. Positions 151 to 153 (KDQ) are interaction with tRNA. The Cysteine persulfide intermediate role is filled by cysteine 202. The tract at residues 312-313 (RY) is interaction with tRNA.

The protein belongs to the MnmA/TRMU family.

The protein resides in the cytoplasm. The catalysed reaction is S-sulfanyl-L-cysteinyl-[protein] + uridine(34) in tRNA + AH2 + ATP = 2-thiouridine(34) in tRNA + L-cysteinyl-[protein] + A + AMP + diphosphate + H(+). Catalyzes the 2-thiolation of uridine at the wobble position (U34) of tRNA, leading to the formation of s(2)U34. The chain is tRNA-specific 2-thiouridylase MnmA from Amoebophilus asiaticus (strain 5a2).